A 345-amino-acid polypeptide reads, in one-letter code: Linoleate 10R-lipoxygenase COP4 (345 aa).

5 residues coordinate Mg(2+): Asp-87, Asp-91, Asn-222, Ser-226, and Glu-230. Positions 87–91 match the DDXXD motif motif; the sequence is DEISD.

This sequence belongs to the terpene synthase family. Mg(2+) serves as cofactor.

It carries out the reaction (2E,6E)-farnesyl diphosphate + H2O = cubebol + diphosphate. It catalyses the reaction (2E,6E)-farnesyl diphosphate = beta-copaene + diphosphate. The enzyme catalyses (2E,6E)-farnesyl diphosphate = beta-cubebene + diphosphate. The catalysed reaction is (2E,6E)-farnesyl diphosphate = (+)-sativene + diphosphate. Its function is as follows. Sesquiterpene synthase that catalyzes the cyclization of farnesyl diphosphate (FPP) into multiple products, including germacrene D, beta-copaene, beta-cubebene, (+)-sativene and cubebol, a natural sesquiterpene alcohol used in the food industry for its cooling and refreshing taste. Terpenoid hydrocarbons resulting from cyclization of farnesyl diphosphate are intermediates in the biosynthesis of biologically active compounds such as antibiotics, toxins and pheromones. The polypeptide is Linoleate 10R-lipoxygenase COP4 (COP4) (Coprinopsis cinerea (strain Okayama-7 / 130 / ATCC MYA-4618 / FGSC 9003) (Inky cap fungus)).